A 226-amino-acid chain; its full sequence is tRNA (guanine-N(1)-)-methyltransferase (226 aa).

Residues Gly-112 and 132 to 137 contribute to the S-adenosyl-L-methionine site; that span reads IGDYVL.

This sequence belongs to the RNA methyltransferase TrmD family. Homodimer.

The protein resides in the cytoplasm. The enzyme catalyses guanosine(37) in tRNA + S-adenosyl-L-methionine = N(1)-methylguanosine(37) in tRNA + S-adenosyl-L-homocysteine + H(+). In terms of biological role, specifically methylates guanosine-37 in various tRNAs. The protein is tRNA (guanine-N(1)-)-methyltransferase of Flavobacterium johnsoniae (strain ATCC 17061 / DSM 2064 / JCM 8514 / BCRC 14874 / CCUG 350202 / NBRC 14942 / NCIMB 11054 / UW101) (Cytophaga johnsonae).